The sequence spans 520 residues: Peptide chain release factor 3 (520 aa).

The tr-type G domain occupies 8–273 (EIRKTFAIIS…AYVDHAPMPS (266 aa)). GTP is bound by residues 17 to 24 (SHPDAGKT), 85 to 89 (DTPGH), and 139 to 142 (NKLD).

Belongs to the TRAFAC class translation factor GTPase superfamily. Classic translation factor GTPase family. PrfC subfamily.

The protein resides in the cytoplasm. In terms of biological role, increases the formation of ribosomal termination complexes and stimulates activities of RF-1 and RF-2. It binds guanine nucleotides and has strong preference for UGA stop codons. It may interact directly with the ribosome. The stimulation of RF-1 and RF-2 is significantly reduced by GTP and GDP, but not by GMP. The polypeptide is Peptide chain release factor 3 (Macrococcus caseolyticus (strain JCSC5402) (Macrococcoides caseolyticum)).